Reading from the N-terminus, the 387-residue chain is MATTKSFLILIVMILATTSSTFASLEEMVTVLSIDGGGIKGIIPGTILEFLEGQLQKMDNNADARLADYFDVIGGTSTGGLLTSMITTPNENNRPFAAANEIVPFFFEHGPHIFNSSTGQFFGPKYDGKYLMQVLQENLGETRVHQALTEVAISSLDIKTNKPVIFTKSNLAKSPELDAKMYDICYSTAAAPTYFPPHYFTTNTINGDKYEFNLVDGAVATVADPALLSISVATRLAEKDPAFASIRSLNYKKMLLLSLGTGTTSEFDKTYTAEETAKWGAIQWMLVIQRMTDAASSYMTDYYLSTVFQAQNSQKNYLRVQENALTGTTTEMDDASEANMESLVQVGENLLKKPVSKDNPETYEEALKRFAKLLSDRKKLRANKASY.

The signal sequence occupies residues 1-23 (MATTKSFLILIVMILATTSSTFA). The PNPLA domain maps to 32-230 (LSIDGGGIKG…TVADPALLSI (199 aa)). Positions 36-41 (GGGIKG) match the GXGXXG motif. The short motif at 75–79 (GTSTG) is the GXSXG element. The Nucleophile role is filled by Ser77. An N-linked (GlcNAc...) asparagine glycan is attached at Asn115. The active-site Proton acceptor is the Asp216. Residues 216-218 (DGA) carry the DGA/G motif. Residues 361–385 (ETYEEALKRFAKLLSDRKKLRANKA) adopt a coiled-coil conformation.

The protein belongs to the patatin family. Tuber.

The protein resides in the vacuole. Its function is as follows. Probable lipolytic acyl hydrolase (LAH), an activity which is thought to be involved in the response of tubers to pathogens. The polypeptide is Patatin group D-3 (Solanum tuberosum (Potato)).